Consider the following 452-residue polypeptide: Bifunctional protein GlmU (452 aa).

Residues 1–226 (MSLSVVILAA…ATEVEGVNTR (226 aa)) are pyrophosphorylase. UDP-N-acetyl-alpha-D-glucosamine contacts are provided by residues 8 to 11 (LAAG), lysine 22, glutamine 73, 78 to 79 (GT), 100 to 102 (YGD), glycine 137, glutamate 151, asparagine 166, and asparagine 224. Aspartate 102 is a binding site for Mg(2+). Residue asparagine 224 participates in Mg(2+) binding. Positions 227–247 (LQLANLERAYQLKKATELLLS) are linker. The segment at 248 to 452 (GVMLRDPNRF…INNWKRPTKK (205 aa)) is N-acetyltransferase. Residues arginine 330 and lysine 348 each contribute to the UDP-N-acetyl-alpha-D-glucosamine site. Catalysis depends on histidine 360, which acts as the Proton acceptor. Residues tyrosine 363 and asparagine 374 each contribute to the UDP-N-acetyl-alpha-D-glucosamine site. Residues alanine 377, 383–384 (NY), serine 402, alanine 420, and arginine 437 each bind acetyl-CoA.

It in the N-terminal section; belongs to the N-acetylglucosamine-1-phosphate uridyltransferase family. This sequence in the C-terminal section; belongs to the transferase hexapeptide repeat family. As to quaternary structure, homotrimer. Requires Mg(2+) as cofactor.

The protein localises to the cytoplasm. It carries out the reaction alpha-D-glucosamine 1-phosphate + acetyl-CoA = N-acetyl-alpha-D-glucosamine 1-phosphate + CoA + H(+). The enzyme catalyses N-acetyl-alpha-D-glucosamine 1-phosphate + UTP + H(+) = UDP-N-acetyl-alpha-D-glucosamine + diphosphate. The protein operates within nucleotide-sugar biosynthesis; UDP-N-acetyl-alpha-D-glucosamine biosynthesis; N-acetyl-alpha-D-glucosamine 1-phosphate from alpha-D-glucosamine 6-phosphate (route II): step 2/2. It participates in nucleotide-sugar biosynthesis; UDP-N-acetyl-alpha-D-glucosamine biosynthesis; UDP-N-acetyl-alpha-D-glucosamine from N-acetyl-alpha-D-glucosamine 1-phosphate: step 1/1. It functions in the pathway bacterial outer membrane biogenesis; LPS lipid A biosynthesis. Catalyzes the last two sequential reactions in the de novo biosynthetic pathway for UDP-N-acetylglucosamine (UDP-GlcNAc). The C-terminal domain catalyzes the transfer of acetyl group from acetyl coenzyme A to glucosamine-1-phosphate (GlcN-1-P) to produce N-acetylglucosamine-1-phosphate (GlcNAc-1-P), which is converted into UDP-GlcNAc by the transfer of uridine 5-monophosphate (from uridine 5-triphosphate), a reaction catalyzed by the N-terminal domain. In Psychromonas ingrahamii (strain DSM 17664 / CCUG 51855 / 37), this protein is Bifunctional protein GlmU.